We begin with the raw amino-acid sequence, 145 residues long: uncharacterized protein (145 aa).

The helical transmembrane segment at 1 to 21 threads the bilayer; the sequence is MWFLVKATFWFSLVLVLLPFL. The segment at 109–145 is disordered; the sequence is TPAESVPSAEATEKAEPAFKRMPVPEHRLDPGPASGK. The segment covering 119–138 has biased composition (basic and acidic residues); sequence ATEKAEPAFKRMPVPEHRLD.

Its subcellular location is the membrane. This is an uncharacterized protein from Rhizobium meliloti (strain 1021) (Ensifer meliloti).